We begin with the raw amino-acid sequence, 1712 residues long: Neurexin-2 (1712 aa).

Residues 1–28 form the signal peptide; it reads MASGSRWRPTPPPLLLLLLLALAARADG. In terms of domain architecture, Laminin G-like 1 spans 29–206; sequence LEFGGGPGQW…LRGATADPLC (178 aa). At 29-1636 the chain is on the extracellular side; that stretch reads LEFGGGPGQW…EVIRESSSTT (1608 aa). A glycan (N-linked (GlcNAc...) asparagine) is linked at Asn60. In terms of domain architecture, EGF-like 1 spans 202–242; sequence ADPLCAPARNPCANGGLCTVLAPGEVGCDCSHTGFGGKFCS. 3 disulfides stabilise this stretch: Cys206/Cys219, Cys213/Cys229, and Cys231/Cys241. 2 consecutive Laminin G-like domains span residues 289 to 486 and 493 to 686; these read VATF…SFRC and DPVT…APFC. A Ca(2+)-binding site is contributed by Asp335. An N-linked (GlcNAc...) asparagine glycan is attached at Asn338. 2 residues coordinate Ca(2+): Leu352 and Met420. Intrachain disulfides connect Cys450–Cys486, Cys657–Cys686, Cys694–Cys705, Cys699–Cys714, and Cys716–Cys726. The EGF-like 2 domain maps to 690–727; that stretch reads TLKQCASAPCRNGGVCREGWNRFICDCIGTGFLGRVCE. Laminin G-like domains are found at residues 732 to 904 and 918 to 1093; these read VLSY…ITYC and DPVT…ERGC. Residues Asp779 and Leu796 each contribute to the Ca(2+) site. Asn841 carries an N-linked (GlcNAc...) asparagine glycan. A Ca(2+)-binding site is contributed by Arg854. 4 disulfides stabilise this stretch: Cys1065–Cys1093, Cys1100–Cys1111, Cys1105–Cys1120, and Cys1122–Cys1132. In terms of domain architecture, EGF-like 3 spans 1096–1133; that stretch reads PSTTCTEESCANQGVCLQQWDGFTCDCTMTSYGGPVCN. Residues 1137 to 1345 form the Laminin G-like 6 domain; it reads TTYIFGKGGA…HLRLVGEGPS (209 aa). Ca(2+) contacts are provided by Asp1189 and Val1206. N-linked (GlcNAc...) asparagine glycosylation occurs at Asn1236. The Ca(2+) site is built by Ile1288 and Asn1290. The segment at 1373–1392 is disordered; sequence ATTTTRRGRSPTLRDSTTQN. The O-linked (Xyl...) (heparan sulfate) serine glycan is linked to Ser1400. Disordered stretches follow at residues 1458–1489 and 1525–1626; these read ATQD…CEEP and TLLS…PGAV. A helical transmembrane segment spans residues 1637–1657; it reads GMVVGIVAAAALCILILLYAM. The Cytoplasmic portion of the chain corresponds to 1658–1712; that stretch reads YKYRNRDEGSYQVDQSRNYISNSAQSNGAVVKEKAPAAPKTPSKAKKNKDKEYYV. A disordered region spans residues 1679-1712; it reads NSAQSNGAVVKEKAPAAPKTPSKAKKNKDKEYYV.

This sequence belongs to the neurexin family. As to quaternary structure, the laminin G-like domain 1 binds to NXPH1. Interacts with PATJ. Interacts with CBLN1, CBLN2 and, less avidly, with CBLN4. Specific isoforms bind neuroligins NLGN1, NLGN2 and NLGN3. Specific isoforms bind to alpha-dystroglycan. Interacts (via Laminin G-like 1 domain) with IGSF21 (Ig-like 1 domain) in a trans-interaction manner. Interacts with CLSTN3. In terms of processing, O-glycosylated; contains heparan sulfate. Heparan sulfate attachment is required for synapse development by mediating interactions with neuroligins. Predominantly expressed in brain.

The protein localises to the presynaptic cell membrane. Functionally, neuronal cell surface protein that may be involved in cell recognition and cell adhesion. May mediate intracellular signaling. This is Neurexin-2 (NRXN2) from Homo sapiens (Human).